The primary structure comprises 437 residues: MKWVTVDRLPQYEGQTVELRGWVQNYRSSGKIQFIIFRDGTGVCQAVLFIKDVPPEVFEAGKRLTQESSIIIRGSVRKDDRAPGGYEIGVQDLEIVQIAEEYPITKKEHGTEFLMDHRHLWIRSNRQVAILRIRNEITMAIHQFLQENGFVLTESPILMGTAAEGGATLFETTYVNDEPAYLSQSGQLHVEATAMALGRVYTFGPTFRAEKSKTRRHLIEFWMVEPEAAYFTHEDNMRLQEEMVTYVVRRVLERRSKELQLIGRDTTLLEKVEPPFPRITYTEAVEMLKKLHKPGDEWEPIEWGEDFGAPHETVLTQQFEKPVFVEKFPVKVKAFYMQPDPENPDVVLGADLLAPEGYGEIIGGSQRIHDPELLKRRFEEHGLDMNTYGWYYDLRRFGSVPHSGFGLGIERTVAWICGLEHVRETIPFPRLLNRLHP.

It belongs to the class-II aminoacyl-tRNA synthetase family. Homodimer.

It localises to the cytoplasm. The enzyme catalyses tRNA(Asn) + L-asparagine + ATP = L-asparaginyl-tRNA(Asn) + AMP + diphosphate + H(+). The polypeptide is Asparagine--tRNA ligase (Symbiobacterium thermophilum (strain DSM 24528 / JCM 14929 / IAM 14863 / T)).